The following is a 224-amino-acid chain: 2-C-methyl-D-erythritol 4-phosphate cytidylyltransferase (224 aa).

The protein belongs to the IspD/TarI cytidylyltransferase family. IspD subfamily.

The catalysed reaction is 2-C-methyl-D-erythritol 4-phosphate + CTP + H(+) = 4-CDP-2-C-methyl-D-erythritol + diphosphate. It functions in the pathway isoprenoid biosynthesis; isopentenyl diphosphate biosynthesis via DXP pathway; isopentenyl diphosphate from 1-deoxy-D-xylulose 5-phosphate: step 2/6. Its function is as follows. Catalyzes the formation of 4-diphosphocytidyl-2-C-methyl-D-erythritol from CTP and 2-C-methyl-D-erythritol 4-phosphate (MEP). The protein is 2-C-methyl-D-erythritol 4-phosphate cytidylyltransferase of Bordetella petrii (strain ATCC BAA-461 / DSM 12804 / CCUG 43448).